A 305-amino-acid polypeptide reads, in one-letter code: Ribosomal RNA small subunit methyltransferase H (305 aa).

Residues 30–32 (GGH), aspartate 49, phenylalanine 74, aspartate 96, and glutamine 103 each bind S-adenosyl-L-methionine.

Belongs to the methyltransferase superfamily. RsmH family.

Its subcellular location is the cytoplasm. It catalyses the reaction cytidine(1402) in 16S rRNA + S-adenosyl-L-methionine = N(4)-methylcytidine(1402) in 16S rRNA + S-adenosyl-L-homocysteine + H(+). Specifically methylates the N4 position of cytidine in position 1402 (C1402) of 16S rRNA. This is Ribosomal RNA small subunit methyltransferase H from Francisella tularensis subsp. novicida (strain U112).